An 821-amino-acid chain; its full sequence is Condensin-2 complex subunit kle-2 (821 aa).

The disordered stretch occupies residues 389 to 426; it reads VMQNDEPNTSRRPDENYAPMDFDDDFGGGGDDDDDDYI. The span at 409-424 shows a compositional bias: acidic residues; it reads DFDDDFGGGGDDDDDD. Residues 529 to 561 are a coiled coil; it reads TAILAEKKRRIKEKTAKIREARIQNMQRKRTAR.

The protein belongs to the CND2 H2 (condensin-2 subunit 2) family. As to quaternary structure, component of the condensin II complex, which contains the mix-1/SMC2 and smc-4/SMC4 heterodimer, and three non SMC subunits, capg-2, kle-2 and hcp-6 that probably regulate the complex. Within the complex, interacts with mix-1, smc-4, capg-2 and hcp-6.

It is found in the nucleus. Its subcellular location is the chromosome. The protein localises to the centromere. Functionally, regulatory subunit of the condensin II complex, a complex that seems to play a role in prophase chromosome condensation and in chromosome segregation in mitosis and in meiosis. This is Condensin-2 complex subunit kle-2 (kle-2) from Caenorhabditis elegans.